Here is a 205-residue protein sequence, read N- to C-terminus: Rho-related GTP-binding protein RhoQ (205 aa).

Residue 16–23 (GDGAVGKT) coordinates GTP. An Effector region motif is present at residues 38 to 46 (YVPTVFDHY). GTP is bound by residues 63 to 67 (DTAGQ) and 121 to 124 (TQID). Residue C202 is modified to Cysteine methyl ester. C202 carries S-farnesyl cysteine lipidation. Positions 203-205 (LIT) are cleaved as a propeptide — removed in mature form.

It belongs to the small GTPase superfamily. Rho family. As to quaternary structure, interacts with EXO70, CDC42EP1, CDC42EP2 and CDC42EP3 in a GTP-dependent manner. Interacts with CDC42EP4, PARD6A, PARD6G (and probably PARD6B) in a GTP-dependent manner. Part of a quaternary complex containing PARD3, some PARD6 protein (PARD6A, PARD6B or PARD6G) and some atypical PKC protein (PRKCI or PRKCZ). Interacts with GOPC. Interacts with ARHGAP33/TCGAP. May be post-translationally modified by both palmitoylation and polyisoprenylation.

The protein localises to the cytoplasm. It is found in the cell membrane. With respect to regulation, regulated by guanine nucleotide exchange factors (GEFs) which promote the exchange of bound GDP for free GTP, GTPase activating proteins (GAPs) which increase the GTP hydrolysis activity, and GDP dissociation inhibitors which inhibit the dissociation of the nucleotide from the GTPase. In terms of biological role, plasma membrane-associated small GTPase which cycles between an active GTP-bound and an inactive GDP-bound state. In active state binds to a variety of effector proteins to regulate cellular responses. Involved in epithelial cell polarization processes. May play a role in CFTR trafficking to the plasma membrane. Causes the formation of thin, actin-rich surface projections called filopodia. This Mus musculus (Mouse) protein is Rho-related GTP-binding protein RhoQ (Rhoq).